The primary structure comprises 172 residues: MSVPGPPSPDGVLAGPPEGLEAGDLTPGLSDTSPDEGLIEDLTIEDKAVEQLAEGLLSHYLPDLQRSKQALQELTQNQVVLLDTLEQEISKFKECHSMLDINALFTEAKHYHAKLVNIRKEMLMLHEKTSKLKKRALKLQQKRQKEELEREQQREKEFEREKQLTAKPAKRT.

Disordered stretches follow at residues 1 to 36 (MSVP…SPDE) and 135 to 172 (RALK…AKRT). Residues 125-167 (LHEKTSKLKKRALKLQQKRQKEELEREQQREKEFEREKQLTAK) are a coiled coil. Residues 143–164 (RQKEELEREQQREKEFEREKQL) show a composition bias toward basic and acidic residues.

This sequence belongs to the BLOC1S6 family. Homodimer. Octamer composed of one copy each BLOC1S1, BLOC1S2, BLOC1S3, BLOC1S4, BLOC1S5, BLOC1S6, DTNBP1/BLOC1S7 and SNAPIN/BLOC1S8. The BLOC-1 complex associates with the AP-3 protein complex and membrane protein cargos. Interacts with BLOC1S4, BLOC1S5, DTNBP1/BLOC1S7, F-actin. Component of the biogenesis of lysosome-related organelles complex 1 (BLOC-1) composed of BLOC1S1, BLOC1S2, BLOC1S3, BLOC1S4, BLOC1S5, BLOC1S6, DTNBP1/BLOC1S7 and SNAPIN/BLOC1S8. Interacts with SNAP25, SNAP47 and STX12.

The protein resides in the cytoplasm. The protein localises to the membrane. Component of the BLOC-1 complex, a complex that is required for normal biogenesis of lysosome-related organelles (LRO), such as platelet dense granules and melanosomes. In concert with the AP-3 complex, the BLOC-1 complex is required to target membrane protein cargos into vesicles assembled at cell bodies for delivery into neurites and nerve terminals. The BLOC-1 complex, in association with SNARE proteins, is also proposed to be involved in neurite extension. May play a role in intracellular vesicle trafficking, particularly in the vesicle-docking and fusion process. This is Biogenesis of lysosome-related organelles complex 1 subunit 6 (BLOC1S6) from Bos taurus (Bovine).